The following is a 474-amino-acid chain: PRAME family member 8 (474 aa).

The stretch at 97 to 122 (QSKLQVLDLRNVDENFCDIFSGATAS) is one LRR 1; degenerate repeat. One copy of the LRR 2; degenerate repeat lies at 177–201 (HVCCKELQVFGMPIHSIIEVLNMVE). The stretch at 202-228 (LDCIQEVEVCCPWELSTLVKFAPYLGQ) is one LRR 3; degenerate repeat. The LRR 4; degenerate repeat unit spans residues 229 to 264 (MRNLRKLVLFNIRASACIPPDNKGQFIARFTSQFLK). 5 LRR repeats span residues 265–290 (LDYF…LRCL), 291–322 (QASL…RQLK), 323–341 (ELDL…PLTG), 347–374 (VATL…VLSR), and 375–399 (CSQL…LLRH).

It belongs to the PRAME family.

This chain is PRAME family member 8, found in Homo sapiens (Human).